Here is a 326-residue protein sequence, read N- to C-terminus: Vacuolar protein sorting-associated protein 26A-A (326 aa).

A disordered region spans residues 306-326; the sequence is TNFHQRFEPQEPQASAEEPEI. Over residues 315-326 the composition is skewed to low complexity; sequence QEPQASAEEPEI.

This sequence belongs to the VPS26 family. As to quaternary structure, component of the heterotrimeric retromer cargo-selective complex (CSC) which is believed to associate with variable sorting nexins to form functionally distinct retromer complex variants.

Its subcellular location is the cytoplasm. The protein localises to the endosome membrane. The protein resides in the early endosome. Functionally, acts as a component of the retromer cargo-selective complex (CSC). The CSC is believed to be the core functional component of retromer or respective retromer complex variants acting to prevent missorting of selected transmembrane cargo proteins into the lysosomal degradation pathway. Retromer mediates retrograde transport of cargo proteins from endosomes to the trans-Golgi network (TGN). The sequence is that of Vacuolar protein sorting-associated protein 26A-A (vps26a-a) from Xenopus laevis (African clawed frog).